The following is a 609-amino-acid chain: Proteasome-associated ATPase (609 aa).

Positions 1 to 25 (MADSERSEAFGTPDDTPLSSNDAAE) are disordered. Positions 19-96 (SSNDAAELEQ…LREEVDRLGQ (78 aa)) form a coiled coil. 296–301 (GCGKTL) serves as a coordination point for ATP. The interval 608 to 609 (YL) is docks into pockets in the proteasome alpha-ring.

Belongs to the AAA ATPase family. As to quaternary structure, homohexamer. Assembles into a hexameric ring structure that caps the 20S proteasome core. Strongly interacts with the prokaryotic ubiquitin-like protein Pup through a hydrophobic interface; the interacting region of ARC lies in its N-terminal coiled-coil domain. There is one Pup binding site per ARC hexamer ring. Upon ATP-binding, the C-terminus of ARC interacts with the alpha-rings of the proteasome core, possibly by binding to the intersubunit pockets.

Its pathway is protein degradation; proteasomal Pup-dependent pathway. Functionally, ATPase which is responsible for recognizing, binding, unfolding and translocation of pupylated proteins into the bacterial 20S proteasome core particle. May be essential for opening the gate of the 20S proteasome via an interaction with its C-terminus, thereby allowing substrate entry and access to the site of proteolysis. Thus, the C-termini of the proteasomal ATPase may function like a 'key in a lock' to induce gate opening and therefore regulate proteolysis. The sequence is that of Proteasome-associated ATPase from Mycobacterium marinum (strain ATCC BAA-535 / M).